The following is a 396-amino-acid chain: NASP-related protein sim3 (396 aa).

The disordered stretch occupies residues 1 to 31 (MSSDTKTLENSKGNSATDADTKNPSSSDSRA). 2 TPR repeats span residues 32 to 65 (IEQL…SESI) and 89 to 122 (IENS…GSFT). A disordered region spans residues 135–164 (NEENSSIAHPEKESEEKETNEASPASEEDE). Residues 143–154 (HPEKESEEKETN) show a composition bias toward basic and acidic residues. The TPR 3 repeat unit spans residues 199-232 (ADIYDLLGELSLEIENFSQASQDLKTALEWKEKV). Positions 267–329 (CEHVEKAAEI…QKTLDLKHGA (63 aa)) form a coiled coil. Residues 284–301 (RENEVTDKKGKGKQKAEE) are compositionally biased toward basic and acidic residues. Disordered regions lie at residues 284–307 (RENE…LTSD) and 334–396 (EAVM…KKKD). The span at 343-353 (SSLLSKDSSSL) shows a compositional bias: low complexity.

It belongs to the NASP family. Interacts with cnp1, hht1, hht2 and hht3; has a preference for CENP-A (cnp1) over histone H3 (hht1/2/3).

The protein localises to the nucleus. In terms of biological role, histone H3 and H3-like CENP-A-specific chaperone. Promotes delivery and incorporation of CENP-A in centromeric chromatin, probably by escorting nascent CENP-A to CENP-A chromatin assembly factors. Required for central core silencing and normal chromosome segregation. This Schizosaccharomyces pombe (strain 972 / ATCC 24843) (Fission yeast) protein is NASP-related protein sim3 (sim3).